We begin with the raw amino-acid sequence, 549 residues long: Probable protein kinase UbiB (549 aa).

One can recognise a Protein kinase domain in the interval aspartate 123 to leucine 501. ATP contacts are provided by residues leucine 129–valine 137 and lysine 152. Aspartate 287 serves as the catalytic Proton acceptor. The next 2 membrane-spanning stretches (helical) occupy residues histidine 496–isoleucine 516 and alanine 520–tryptophan 540.

The protein belongs to the ABC1 family. UbiB subfamily.

Its subcellular location is the cell inner membrane. It functions in the pathway cofactor biosynthesis; ubiquinone biosynthesis [regulation]. Is probably a protein kinase regulator of UbiI activity which is involved in aerobic coenzyme Q (ubiquinone) biosynthesis. This Shewanella baltica (strain OS223) protein is Probable protein kinase UbiB.